Consider the following 395-residue polypeptide: Xylose isomerase (395 aa).

Active-site residues include His-54 and Asp-57. Positions 181, 217, 220, 245, 255, 257, and 293 each coordinate Mg(2+).

It belongs to the xylose isomerase family. As to quaternary structure, homotetramer. Mg(2+) serves as cofactor.

The protein resides in the cytoplasm. It carries out the reaction alpha-D-xylose = alpha-D-xylulofuranose. The polypeptide is Xylose isomerase (Pseudarthrobacter chlorophenolicus (strain ATCC 700700 / DSM 12829 / CIP 107037 / JCM 12360 / KCTC 9906 / NCIMB 13794 / A6) (Arthrobacter chlorophenolicus)).